Here is a 251-residue protein sequence, read N- to C-terminus: Histocompatibility antigen 60b (251 aa).

An N-terminal signal peptide occupies residues 1–24 (MAKSSLSLNWSLLVLLNFLGATLS). The Extracellular segment spans residues 25 to 212 (TGTDSLSCEL…NSDTQGLSFT (188 aa)). N-linked (GlcNAc...) asparagine glycans are attached at residues N63, N93, N126, and N189. A helical membrane pass occupies residues 213–233 (WIVIICIGGIVSFMAFMVFAW). The Cytoplasmic segment spans residues 234–251 (CMLKKKKGALCCSSSSTT).

It belongs to the NKG2D ligand family. In strain C57BL/6J, strongly expressed in cardiac muscle and skeletal muscle, with lower expression levels in spleen, liver, kidney and thymus. In strain BALB/cJ, weakly expressed in cardiac muscle, spleen, kidney and thymus.

Its subcellular location is the cell membrane. Functionally, ligand for the KLRK1 immunosurveillance receptor. Binding to KLRK1 stimulates cell lysis in vitro. The sequence is that of Histocompatibility antigen 60b from Mus musculus (Mouse).